The primary structure comprises 142 residues: Large ribosomal subunit protein uL13 (142 aa).

Belongs to the universal ribosomal protein uL13 family. As to quaternary structure, part of the 50S ribosomal subunit.

Functionally, this protein is one of the early assembly proteins of the 50S ribosomal subunit, although it is not seen to bind rRNA by itself. It is important during the early stages of 50S assembly. The polypeptide is Large ribosomal subunit protein uL13 (Histophilus somni (strain 2336) (Haemophilus somnus)).